The chain runs to 258 residues: Aspartate/glutamate leucyltransferase (258 aa).

It belongs to the R-transferase family. Bpt subfamily.

The protein localises to the cytoplasm. The catalysed reaction is N-terminal L-glutamyl-[protein] + L-leucyl-tRNA(Leu) = N-terminal L-leucyl-L-glutamyl-[protein] + tRNA(Leu) + H(+). It catalyses the reaction N-terminal L-aspartyl-[protein] + L-leucyl-tRNA(Leu) = N-terminal L-leucyl-L-aspartyl-[protein] + tRNA(Leu) + H(+). Its function is as follows. Functions in the N-end rule pathway of protein degradation where it conjugates Leu from its aminoacyl-tRNA to the N-termini of proteins containing an N-terminal aspartate or glutamate. The protein is Aspartate/glutamate leucyltransferase of Rhizobium etli (strain ATCC 51251 / DSM 11541 / JCM 21823 / NBRC 15573 / CFN 42).